Here is a 614-residue protein sequence, read N- to C-terminus: Fructokinase-like 2, chloroplastic (614 aa).

The transit peptide at 1–44 (MASLSFTQFLSFPRCNADVPCLLQSHGFVKFRGERWNGKQSFSM) directs the protein to the chloroplast. Disordered stretches follow at residues 47-75 (GRRK…KPSK) and 542-592 (GYPP…YVMK). Positions 548 to 563 (DMEEEEDDEEEDEVES) are enriched in acidic residues. Over residues 571 to 583 (ITEKEYRTSKPYD) the composition is skewed to basic and acidic residues.

Belongs to the carbohydrate kinase PfkB family. In terms of assembly, interacts with CITRX/TRXz. Binds to FLN1 and PTAC5. Associates with the plastid-encoded RNA polymerase (PEP) complex.

Its subcellular location is the plastid. It localises to the chloroplast. In terms of biological role, required for proper chloroplast development, most likely through regulating plastid-encoded polymerase (PEP) dependent chloroplast transcription. Acts as a component of the transcriptionally active plastid chromosome that is required for plastid gene expression. The protein is Fructokinase-like 2, chloroplastic of Arabidopsis thaliana (Mouse-ear cress).